The following is a 271-amino-acid chain: Sorting nexin-11 (271 aa).

In terms of domain architecture, PX spans 16-132 (VITVRVQDPR…HLFLQSQLSV (117 aa)). Residues arginine 59, lysine 85, and arginine 99 each coordinate a 1,2-diacyl-sn-glycero-3-phospho-(1D-myo-inositol-3-phosphate). Positions 135 to 139 (IEACV) are important for membrane trafficking. The disordered stretch occupies residues 185-271 (PRSGRRSSPS…PTQLDTAWDK (87 aa)). Residues 213–230 (SEGPSSESPTLLPSSSLP) show a composition bias toward low complexity.

The protein belongs to the sorting nexin family. In terms of assembly, monomer. Interacts with TRPV3; this interaction promotes TRPV3 trafficking from the cell membrane to lysosome for degradation.

It is found in the cell membrane. Its subcellular location is the endosome. It localises to the cytoplasm. Its function is as follows. Phosphoinositide-binding protein involved in protein sorting and membrane trafficking in endosomes. Regulates the levels of TRPV3 by promoting its trafficking from the cell membrane to lysosome for degradation. In Mus musculus (Mouse), this protein is Sorting nexin-11 (Snx11).